The following is a 119-amino-acid chain: Large ribosomal subunit protein bL20 (119 aa).

This sequence belongs to the bacterial ribosomal protein bL20 family.

In terms of biological role, binds directly to 23S ribosomal RNA and is necessary for the in vitro assembly process of the 50S ribosomal subunit. It is not involved in the protein synthesizing functions of that subunit. This is Large ribosomal subunit protein bL20 from Azoarcus sp. (strain BH72).